The chain runs to 363 residues: Adenosine deaminase (363 aa).

Residue A2 is modified to N-acetylalanine. H15 and H17 together coordinate Zn(2+). Substrate-binding residues include H17 and D19. K54 is modified (N6-acetyllysine). G184 is a binding site for substrate. Residue H214 coordinates Zn(2+). E217 acts as the Proton donor in catalysis. K232 is subject to N6-acetyllysine. D295 is a Zn(2+) binding site. D296 serves as a coordination point for substrate.

It belongs to the metallo-dependent hydrolases superfamily. Adenosine and AMP deaminases family. As to quaternary structure, interacts with DPP4 (via extracellular domain). Interacts with PLG (via Kringle 4 domain); the interaction stimulates PLG activation when in complex with DPP4. Zn(2+) is required as a cofactor. In terms of tissue distribution, expressed in gastrointestinal tissues (at protein level).

The protein resides in the cell membrane. Its subcellular location is the cell junction. The protein localises to the cytoplasmic vesicle lumen. It localises to the cytoplasm. It is found in the lysosome. The enzyme catalyses adenosine + H2O + H(+) = inosine + NH4(+). It carries out the reaction 2'-deoxyadenosine + H2O + H(+) = 2'-deoxyinosine + NH4(+). It catalyses the reaction cordycepin + H2O + H(+) = 3'-deoxyinosine + NH4(+). Catalyzes the hydrolytic deamination of adenosine and 2-deoxyadenosine. Plays an important role in purine metabolism and in adenosine homeostasis. Modulates signaling by extracellular adenosine, and so contributes indirectly to cellular signaling events. Acts as a positive regulator of T-cell coactivation, by binding DPP4. Its interaction with DPP4 regulates lymphocyte-epithelial cell adhesion. Enhances dendritic cell immunogenicity by affecting dendritic cell costimulatory molecule expression and cytokines and chemokines secretion. Enhances CD4+ T-cell differentiation and proliferation. Acts as a positive modulator of adenosine receptors ADORA1 and ADORA2A, by enhancing their ligand affinity via conformational change. Stimulates plasminogen activation. Plays a role in male fertility. Plays a protective role in early postimplantation embryonic development. Also responsible for the deamination of cordycepin (3'-deoxyadenosine), a fungal natural product that shows antitumor, antibacterial, antifungal, antivirus, and immune regulation properties. The chain is Adenosine deaminase (ADA) from Bos taurus (Bovine).